A 157-amino-acid polypeptide reads, in one-letter code: Small ribosomal subunit protein bS16 (157 aa).

Residues 114 to 157 (NEGPTAEAITEKKKKAKEEAAAKAAAEAEAAAKAEEAPAEEAAE) form a disordered region.

It belongs to the bacterial ribosomal protein bS16 family.

The sequence is that of Small ribosomal subunit protein bS16 from Corynebacterium diphtheriae (strain ATCC 700971 / NCTC 13129 / Biotype gravis).